Consider the following 270-residue polypeptide: MSDQQQPPVYKIALGIEYDGSKYYGWQRQNEVRSVQEKLEKALSQVANEPITVFCAGRTDAGVHGTGQVVHFETTALRKDAAWTLGVNANLPGDIAVRWVKAVPDDFHARFSATARRYRYIIYNHRLRPAVLSKGVTHFYEPLDAERMHRAAQCLLGENDFTSFRAVQCQSRTPWRNVMHINVTRHGPYVVVDIKANAFVHHMVRNIVGSLMEVGAHNQPESWIAELLAAKDRTLAAATAKAEGLYLVAVDYPDRYDLPKPPMGPLFLAD.

Asp60 acts as the Nucleophile in catalysis. Residues 107–111 (FHARF) are RNA binding. Tyr118 contributes to the substrate binding site. Residues 168 to 172 (QCQSR) form an interaction with tRNA region.

This sequence belongs to the tRNA pseudouridine synthase TruA family. In terms of assembly, homodimer.

The catalysed reaction is uridine(38/39/40) in tRNA = pseudouridine(38/39/40) in tRNA. Formation of pseudouridine at positions 38, 39 and 40 in the anticodon stem and loop of transfer RNAs. The polypeptide is tRNA pseudouridine synthase A (Escherichia coli O9:H4 (strain HS)).